Reading from the N-terminus, the 545-residue chain is MSNKFKKILVTCALPYANGPIHIGHMLEHIQADIWVRYQRMRNNEVWFISSDDAHGTAIMLKSEKLGITPIKLIKKIKEEHIIDFSNFNISHDNYHSTHCVENLFLLRKIFLSLSEQKLINEKKIFQFYDNTKKMFLPDRFIKGTCPFCSSKNQNGDNCEICGSIYEPTDLVNPISVISNSVPILKNTTHLYFNLPLFTNMLNKWIHSGILEKSVAKKTEEWLKSGLKEWGISRDAPYFGFKIPKFDKKYFYVWLDAPVGYISAFKNFCTKNKKVDFNEFWKKESKCELYHFIGKDIIYFHTLFWPAILEASSYRKPNGIFVHGHLTINGLKLSKSRGFLIKASDWIKCFDSDSLRYYYASKLSNNINDIEINLEDFIQKINSDIVNKLVNLASRNASFIHKYFDGYLADSLGDCNLYQDFIDISKKIANFFENRQFSSVIRECMKLLDLANQYINQREPWKIKQDNFNKLHTICTVGINLFRLVVIFLKPIIPDLAKKTEYFLISDLTWKGIDKPLLSHKIKKFKKLYNRINHDKILQLSLLCK.

The short motif at 15–25 (PYANGPIHIGH) is the 'HIGH' region element. Residues Cys146, Cys149, Cys159, and Cys162 each contribute to the Zn(2+) site. Positions 332–336 (KLSKS) match the 'KMSKS' region motif. An ATP-binding site is contributed by Lys335.

The protein belongs to the class-I aminoacyl-tRNA synthetase family. MetG type 1 subfamily. In terms of assembly, monomer. It depends on Zn(2+) as a cofactor.

The protein resides in the cytoplasm. It catalyses the reaction tRNA(Met) + L-methionine + ATP = L-methionyl-tRNA(Met) + AMP + diphosphate. Its function is as follows. Is required not only for elongation of protein synthesis but also for the initiation of all mRNA translation through initiator tRNA(fMet) aminoacylation. The polypeptide is Methionine--tRNA ligase (metG) (Buchnera aphidicola subsp. Schizaphis graminum (strain Sg)).